Consider the following 215-residue polypeptide: MAVIYNWFNDRLEIQAVADDITAKYVPPHVNLFYCLGGITLTCFLIQVATGFALTFYYRPTVGEALSSVRSIMLDTNFGWLIRSVHRWCASMMVLMMVLHVFRVYLTGGFKNPRESTWVTGVIMASCTVSFGVTGYSLPWDQVGYWAVKIVTGVPEAIPVIGPAIVQLLRGNSSVGQATLTRFYSLHTFVLPLLTAVFMLGHFLMIRKQGISGPL.

A helical membrane pass occupies residues 32-52; sequence LFYCLGGITLTCFLIQVATGF. Position 35 (cysteine 35) interacts with heme c. The heme b site is built by histidine 86 and histidine 100. The next 3 membrane-spanning stretches (helical) occupy residues 90-110, 116-136, and 186-206; these read ASMM…TGGF, STWV…VTGY, and LHTF…FLMI. Histidine 187 and histidine 202 together coordinate heme b.

Belongs to the cytochrome b family. PetB subfamily. As to quaternary structure, the 4 large subunits of the cytochrome b6-f complex are cytochrome b6, subunit IV (17 kDa polypeptide, PetD), cytochrome f and the Rieske protein, while the 4 small subunits are PetG, PetL, PetM and PetN. The complex functions as a dimer. Heme b is required as a cofactor. The cofactor is heme c.

It is found in the plastid. It localises to the chloroplast thylakoid membrane. Component of the cytochrome b6-f complex, which mediates electron transfer between photosystem II (PSII) and photosystem I (PSI), cyclic electron flow around PSI, and state transitions. The chain is Cytochrome b6 from Bigelowiella natans (Pedinomonas minutissima).